Reading from the N-terminus, the 285-residue chain is S-methyl-5'-thioadenosine phosphorylase (285 aa).

Phosphate-binding positions include serine 10, 52 to 53, and 85 to 86; these read RH and TA. Methionine 188 contacts substrate. Threonine 189 is a phosphate binding site. 212-214 contributes to the substrate binding site; sequence DYD.

This sequence belongs to the PNP/MTAP phosphorylase family. MTAP subfamily. Homotrimer.

The protein localises to the cytoplasm. Its subcellular location is the nucleus. It carries out the reaction S-methyl-5'-thioadenosine + phosphate = 5-(methylsulfanyl)-alpha-D-ribose 1-phosphate + adenine. It functions in the pathway amino-acid biosynthesis; L-methionine biosynthesis via salvage pathway; S-methyl-5-thio-alpha-D-ribose 1-phosphate from S-methyl-5'-thioadenosine (phosphorylase route): step 1/1. Catalyzes the reversible phosphorylation of S-methyl-5'-thioadenosine (MTA) to adenine and 5-methylthioribose-1-phosphate. Involved in the breakdown of MTA, a major by-product of polyamine biosynthesis. Responsible for the first step in the methionine salvage pathway after MTA has been generated from S-adenosylmethionine. Has broad substrate specificity with 6-aminopurine nucleosides as preferred substrates. The sequence is that of S-methyl-5'-thioadenosine phosphorylase from Caenorhabditis briggsae.